We begin with the raw amino-acid sequence, 206 residues long: Ribonuclease HII (206 aa).

Residues 22–206 form the RNase H type-2 domain; that stretch reads RFICGVDEAG…ISFLKNILSL (185 aa). A divalent metal cation is bound by residues D28, E29, and D120.

It belongs to the RNase HII family. It depends on Mn(2+) as a cofactor. Mg(2+) serves as cofactor.

It is found in the cytoplasm. The catalysed reaction is Endonucleolytic cleavage to 5'-phosphomonoester.. Its function is as follows. Endonuclease that specifically degrades the RNA of RNA-DNA hybrids. The sequence is that of Ribonuclease HII from Caldicellulosiruptor bescii (strain ATCC BAA-1888 / DSM 6725 / KCTC 15123 / Z-1320) (Anaerocellum thermophilum).